The chain runs to 633 residues: Putative oligopeptide transporter HI_0561 (633 aa).

Transmembrane regions (helical) follow at residues 8–28, 45–65, 70–90, 128–148, 180–200, 230–250, 281–301, 311–331, 345–365, 379–399, 420–440, 483–503, 515–535, 564–584, and 604–624; these read GVTFASSIPAAVISMAVLKFF, SAGTLSSVIFVLPGLLMMGYW, FWQTMLICAAGGTLGVLFTIP, IAYGGVLAGLVAFLTNGLRVM, IGIVGGIAMLIGVILTWGVAV, IGVGTIGIAAIWTLLILMKPM, MIYILIATVALIVISLHHFIA, ILLVVVCTFLAVFIGFFVAAA, PISGIGIISVIVISLVLVSIG, FLTALTLFTASIVITTACISN, VALIIGCFVGALVIAPVLEIL, WTYILTGVGLGAVLITIDAFL, VIAVGIGIYLPPSINTPVIVG, LFSAGLIVGESLMGVILAFII, and WDTIGEWFGLIVFIVGIVIFA.

Belongs to the oligopeptide OPT transporter family.

Its subcellular location is the cell membrane. This chain is Putative oligopeptide transporter HI_0561, found in Haemophilus influenzae (strain ATCC 51907 / DSM 11121 / KW20 / Rd).